A 144-amino-acid polypeptide reads, in one-letter code: Histone H2B.2, sperm (144 aa).

A disordered region spans residues 1 to 51 (MPRSPAKTSPRKGSPRKGSPSRKASPKRGGKGAKRAGKGGRRRRVVKRRRR). 5 consecutive short sequence motifs (SPKK motif) follow at residues 4–7 (SPAK), 9–12 (SPRK), 14–17 (SPRK), 19–22 (SPSR), and 25–28 (SPKR). Phosphoserine is present on residues serine 14, serine 19, and serine 25. The span at 24-51 (ASPKRGGKGAKRAGKGGRRRRVVKRRRR) shows a compositional bias: basic residues. The O-linked (GlcNAc) serine glycan is linked to serine 131. A Glycyl lysine isopeptide (Lys-Gly) (interchain with G-Cter in ubiquitin) cross-link involves residue lysine 139.

Belongs to the histone H2B family. As to quaternary structure, the nucleosome is a histone octamer containing two molecules each of H2A, H2B, H3 and H4 assembled in one H3-H4 heterotetramer and two H2A-H2B heterodimers. The octamer wraps approximately 147 bp of DNA. In terms of processing, monoubiquitination of Lys-139 gives a specific tag for epigenetic transcriptional activation and is also prerequisite for histone H3 'Lys-4' and 'Lys-79' methylation. Post-translationally, phosphorylated on SPKK motifs 3, 4 and 5; which may regulate DNA binding. Dephosphorylated during maturation of spermatids to mature sperm and rephosphorylated at fertilization.

The protein resides in the nucleus. It localises to the chromosome. Core component of nucleosome. Nucleosomes wrap and compact DNA into chromatin, limiting DNA accessibility to the cellular machineries which require DNA as a template. Histones thereby play a central role in transcription regulation, DNA repair, DNA replication and chromosomal stability. DNA accessibility is regulated via a complex set of post-translational modifications of histones, also called histone code, and nucleosome remodeling. The chain is Histone H2B.2, sperm from Parechinus angulosus (Angulate sea urchin).